Consider the following 261-residue polypeptide: Thiamine thiazole synthase (261 aa).

Residues alanine 33, 52–53 (ER), glycine 60, valine 124, and 152–154 (HVD) contribute to the NAD(+) site. 2 residues coordinate Fe cation: aspartate 154 and histidine 169. Methionine 219 is an NAD(+) binding site. Arginine 229 serves as a coordination point for glycine.

It belongs to the THI4 family. Homooctamer; tetramer of dimers. Fe(2+) is required as a cofactor.

It catalyses the reaction hydrogen sulfide + glycine + NAD(+) = ADP-5-ethyl-4-methylthiazole-2-carboxylate + nicotinamide + 3 H2O + H(+). Its pathway is cofactor biosynthesis; thiamine diphosphate biosynthesis. Its function is as follows. Involved in the biosynthesis of the thiazole moiety of thiamine. Catalyzes the conversion of NAD and glycine to adenosine diphosphate 5-(2-hydroxyethyl)-4-methylthiazole-2-carboxylate (ADT), an adenylated thiazole intermediate, using free sulfide as a source of sulfur. The polypeptide is Thiamine thiazole synthase (Pyrobaculum islandicum (strain DSM 4184 / JCM 9189 / GEO3)).